A 475-amino-acid polypeptide reads, in one-letter code: MEVSSELLSNGWTSWQRVLLTASLLTCWLLPITAGVTIESVPPKLVEGENVLLRVDNLPENLRVFVWYRGVTDMSLGIALYSLDYSTSVTGPKHSGRETLYRNGSLWIQNVTREDTGYYTLQTISKNGKVVSNTSIFLQVNSSLFICGRPSPPALLTIESVPASVAEGGSVLLLVHSLPDNLQSLLWYKGLTVFNKVEIARHRTVKNSSEMGPAYSGREIVYSNGSLLLQNVTWEDTGFYTLQIVNRYWKMELAHIYLQVDTSLSSCCDDFNSVQLRINPVPPHAAEGERVLLQVHNLPEDVQTFLWYKGVYSTQSFKITEYSIVTESLINGYAHSGREILFINGSLLLQDVTEKDSGFYTLVTIDSNVKVETAHVQVNVNKLVTQPVMRVTDSTVRIQGSVVFTCFSDNTGVSIRWLFNNQNLQLTERMTLSPSKCQLRIHTVRKEDAGEYQCEAFNPVSSKTSLPVRLTVMNE.

An N-terminal signal peptide occupies residues 1 to 35 (MEVSSELLSNGWTSWQRVLLTASLLTCWLLPITAG). Ig-like V-type domains lie at 44 to 140 (KLVE…FLQV), 162 to 260 (PASV…YLQV), and 280 to 380 (PVPP…QVNV). N-linked (GlcNAc...) asparagine glycosylation is found at asparagine 103, asparagine 110, and asparagine 231. An Ig-like C2-type domain is found at 387–471 (PVMRVTDSTV…SKTSLPVRLT (85 aa)). Residues cysteine 406 and cysteine 454 are joined by a disulfide bond.

Belongs to the immunoglobulin superfamily. CEA family.

It is found in the secreted. Its function is as follows. May have an angiogenic function during early placental development. Binds to cell-surface heparan sulfate proteoglycans (HSPGs), and stimulates secretion of the proangiogenic factors VEGFA and TGFB from uterine dendritic cells and natural killer cells. Also induces endothelial tube formation in vitro. The protein is Pregnancy-specific glycoprotein 22 of Mus musculus (Mouse).